Here is a 69-residue protein sequence, read N- to C-terminus: uncharacterized protein (69 aa).

This is an uncharacterized protein from Treponema pallidum (strain Nichols).